Consider the following 294-residue polypeptide: Deubiquitinase OTUD6B (294 aa).

2 disordered regions span residues 1-46 and 67-120; these read MDEA…RKQL and AFAQ…ERDE. 2 stretches are compositionally biased toward polar residues: residues 27 to 36 and 73 to 86; these read KIQSMKNSVP and PEPT…NGVT. Residues 111-120 are compositionally biased toward basic and acidic residues; the sequence is KAAQEKERDE. Positions 150–287 constitute an OTU domain; sequence LQIRQIPSDG…GEHYNSVELL (138 aa). The cys-loop stretch occupies residues 155–161; that stretch reads IPSDGHC. The active site involves D158. The active-site Nucleophile is the C161. The interval 222-232 is variable-loop; that stretch reads IVNTPAWGGQL. The segment at 270-280 is his-loop; it reads YMRHAYGLGEH. H280 is an active-site residue.

The catalysed reaction is Thiol-dependent hydrolysis of ester, thioester, amide, peptide and isopeptide bonds formed by the C-terminal Gly of ubiquitin (a 76-residue protein attached to proteins as an intracellular targeting signal).. Deubiquitinating enzyme that may play a role in the ubiquitin-dependent regulation of different cellular processes. This Xenopus tropicalis (Western clawed frog) protein is Deubiquitinase OTUD6B (otud6b).